The sequence spans 469 residues: Argininosuccinate lyase (469 aa).

This sequence belongs to the lyase 1 family. Argininosuccinate lyase subfamily.

It is found in the cytoplasm. It carries out the reaction 2-(N(omega)-L-arginino)succinate = fumarate + L-arginine. Its pathway is amino-acid biosynthesis; L-arginine biosynthesis; L-arginine from L-ornithine and carbamoyl phosphate: step 3/3. The protein is Argininosuccinate lyase of Novosphingobium aromaticivorans (strain ATCC 700278 / DSM 12444 / CCUG 56034 / CIP 105152 / NBRC 16084 / F199).